We begin with the raw amino-acid sequence, 113 residues long: Large ribosomal subunit protein eL31 (113 aa).

Belongs to the eukaryotic ribosomal protein eL31 family. Component of the large ribosomal subunit (LSU). Mature yeast ribosomes consist of a small (40S) and a large (60S) subunit. The 40S small subunit contains 1 molecule of ribosomal RNA (18S rRNA) and at least 33 different proteins. The large 60S subunit contains 3 rRNA molecules (25S, 5.8S and 5S rRNA) and at least 46 different proteins.

It localises to the cytoplasm. In terms of biological role, component of the ribosome, a large ribonucleoprotein complex responsible for the synthesis of proteins in the cell. The small ribosomal subunit (SSU) binds messenger RNAs (mRNAs) and translates the encoded message by selecting cognate aminoacyl-transfer RNA (tRNA) molecules. The large subunit (LSU) contains the ribosomal catalytic site termed the peptidyl transferase center (PTC), which catalyzes the formation of peptide bonds, thereby polymerizing the amino acids delivered by tRNAs into a polypeptide chain. The nascent polypeptides leave the ribosome through a tunnel in the LSU and interact with protein factors that function in enzymatic processing, targeting, and the membrane insertion of nascent chains at the exit of the ribosomal tunnel. In Schizosaccharomyces pombe (strain 972 / ATCC 24843) (Fission yeast), this protein is Large ribosomal subunit protein eL31 (rpl31).